The chain runs to 331 residues: Phenylalanine--tRNA ligase alpha subunit (331 aa).

Residue glutamate 252 coordinates Mg(2+).

The protein belongs to the class-II aminoacyl-tRNA synthetase family. Phe-tRNA synthetase alpha subunit type 1 subfamily. In terms of assembly, tetramer of two alpha and two beta subunits. Mg(2+) serves as cofactor.

It is found in the cytoplasm. It catalyses the reaction tRNA(Phe) + L-phenylalanine + ATP = L-phenylalanyl-tRNA(Phe) + AMP + diphosphate + H(+). This is Phenylalanine--tRNA ligase alpha subunit from Marinomonas sp. (strain MWYL1).